A 311-amino-acid chain; its full sequence is Malate dehydrogenase (311 aa).

NAD(+) contacts are provided by residues 7 to 13 (GAAGGIG) and aspartate 34. Positions 81 and 87 each coordinate substrate. NAD(+)-binding positions include asparagine 94 and 117 to 119 (ITN). Substrate contacts are provided by asparagine 119 and arginine 153. Histidine 177 (proton acceptor) is an active-site residue. Position 227 (methionine 227) interacts with NAD(+).

Belongs to the LDH/MDH superfamily. MDH type 1 family. As to quaternary structure, homodimer.

It catalyses the reaction (S)-malate + NAD(+) = oxaloacetate + NADH + H(+). Catalyzes the reversible oxidation of malate to oxaloacetate. This Pseudoalteromonas atlantica (strain T6c / ATCC BAA-1087) protein is Malate dehydrogenase.